Here is an 88-residue protein sequence, read N- to C-terminus: Probable Fe(2+)-trafficking protein (88 aa).

The protein belongs to the Fe(2+)-trafficking protein family.

In terms of biological role, could be a mediator in iron transactions between iron acquisition and iron-requiring processes, such as synthesis and/or repair of Fe-S clusters in biosynthetic enzymes. The sequence is that of Probable Fe(2+)-trafficking protein from Neisseria gonorrhoeae (strain ATCC 700825 / FA 1090).